We begin with the raw amino-acid sequence, 138 residues long: Cysteine desulfuration protein SufE (138 aa).

Residue Cys-51 is the Cysteine persulfide intermediate of the active site.

It belongs to the SufE family. Homodimer. Interacts with SufS.

The protein resides in the cytoplasm. It participates in cofactor biosynthesis; iron-sulfur cluster biosynthesis. Its function is as follows. Participates in cysteine desulfuration mediated by SufS. Cysteine desulfuration mobilizes sulfur from L-cysteine to yield L-alanine and constitutes an essential step in sulfur metabolism for biosynthesis of a variety of sulfur-containing biomolecules. Functions as a sulfur acceptor for SufS, by mediating the direct transfer of the sulfur atom from the S-sulfanylcysteine of SufS, an intermediate product of cysteine desulfuration process. The sequence is that of Cysteine desulfuration protein SufE from Shigella flexneri serotype 5b (strain 8401).